We begin with the raw amino-acid sequence, 372 residues long: L-selectin (372 aa).

Residues 1-28 form the signal peptide; the sequence is MVFPWRCEGTYWGSRNILKLWVWTLLCC. A propeptide spanning residues 29–38 is cleaved from the precursor; sequence DFLIHHGTHC. Topologically, residues 39-332 are extracellular; that stretch reads WTYHYSEKPM…FSKIKEGDYN (294 aa). The C-type lectin domain maps to 55 to 155; it reads KFCKQNYTDL…ACHKRKAALC (101 aa). Intrachain disulfides connect C57–C155, C128–C147, C128–C160, C160–C171, C165–C180, C182–C191, C197–C241, C227–C254, C259–C303, and C289–C316. N-linked (GlcNAc...) asparagine glycosylation is found at N60 and N104. The Ca(2+) site is built by E118, N120, E126, N143, and D144. The region spanning 156–192 is the EGF-like domain; it reads YTASCQPGSCNGRGECVETINNHTCICDAGYYGPQCQ. An N-linked (GlcNAc...) asparagine glycan is attached at N177. Sushi domains are found at residues 195–256 and 257–318; these read VQCE…ICQV and VQCE…ICQE. N-linked (GlcNAc...) asparagine glycans are attached at residues N216, N226, N246, N278, N288, N308, and N320. Residues 333–355 traverse the membrane as a helical segment; it reads PLFIPVAVMVTAFSGLAFLIWLA. At 356 to 372 the chain is on the cytoplasmic side; the sequence is RRLKKGKKSQERMDDPY.

Belongs to the selectin/LECAM family. In terms of assembly, interaction with SELPLG/PSGL1 and PODXL2 is required for promoting recruitment and rolling of leukocytes. This interaction is dependent on the sialyl Lewis X glycan modification of SELPLG and PODXL2, and tyrosine sulfation modifications of SELPLG. Sulfation on 'Tyr-51' of SELPLG is important for L-selectin binding. Post-translationally, N-glycosylated. Predominantly expressed in lymphoid tissue.

It localises to the cell membrane. Functionally, calcium-dependent lectin that mediates cell adhesion by binding to glycoproteins on neighboring cells. Mediates the adherence of lymphocytes to endothelial cells of high endothelial venules in peripheral lymph nodes. Promotes initial tethering and rolling of leukocytes in endothelia. The polypeptide is L-selectin (Sell) (Mus musculus (Mouse)).